The following is a 157-amino-acid chain: Transcriptional repressor NrdR (157 aa).

Residues 1-21 (MRCPYCSSEDSQVKDSRPAED) are disordered. Residues 3–34 (CPYCSSEDSQVKDSRPAEDGNAIRRRRICPDC) fold into a zinc finger. The span at 11 to 21 (SQVKDSRPAED) shows a compositional bias: basic and acidic residues. An ATP-cone domain is found at 49-139 (LMIIKKTGRK…VYRDFSHAED (91 aa)).

The protein belongs to the NrdR family. Requires Zn(2+) as cofactor.

In terms of biological role, negatively regulates transcription of bacterial ribonucleotide reductase nrd genes and operons by binding to NrdR-boxes. This chain is Transcriptional repressor NrdR, found in Sinorhizobium fredii (strain NBRC 101917 / NGR234).